The primary structure comprises 392 residues: Chaperone protein DnaJ (392 aa).

Positions 2–67 (DYYTILGVAK…QKRESYDRYG (66 aa)) constitute a J domain. The CR-type zinc-finger motif lies at 149–227 (GVEKELLVSG…CRGQGRIKDK (79 aa)). Residues Cys162, Cys165, Cys179, Cys182, Cys201, Cys204, Cys215, and Cys218 each contribute to the Zn(2+) site. 4 CXXCXGXG motif repeats span residues 162–169 (CDACSGSG), 179–186 (CDRCKGSG), 201–208 (CPDCSGEG), and 215–222 (CSVCRGQG).

It belongs to the DnaJ family. As to quaternary structure, homodimer. Zn(2+) is required as a cofactor.

It localises to the cytoplasm. Participates actively in the response to hyperosmotic and heat shock by preventing the aggregation of stress-denatured proteins and by disaggregating proteins, also in an autonomous, DnaK-independent fashion. Unfolded proteins bind initially to DnaJ; upon interaction with the DnaJ-bound protein, DnaK hydrolyzes its bound ATP, resulting in the formation of a stable complex. GrpE releases ADP from DnaK; ATP binding to DnaK triggers the release of the substrate protein, thus completing the reaction cycle. Several rounds of ATP-dependent interactions between DnaJ, DnaK and GrpE are required for fully efficient folding. Also involved, together with DnaK and GrpE, in the DNA replication of plasmids through activation of initiation proteins. In Chlamydia trachomatis serovar L2 (strain ATCC VR-902B / DSM 19102 / 434/Bu), this protein is Chaperone protein DnaJ.